Consider the following 456-residue polypeptide: GTPase Der (456 aa).

2 consecutive EngA-type G domains span residues 4-169 and 178-353; these read PVVA…PSKD and VQLA…DQSR. Residues 10-17, 57-61, 120-123, 184-191, 231-235, and 296-299 each bind GTP; these read GRPNVGKS, DTGGL, NKCE, DTAGI, and NKWD. One can recognise a KH-like domain in the interval 354–439; that stretch reads RRVTTSVVNE…PIKLFWRGKQ (86 aa).

It belongs to the TRAFAC class TrmE-Era-EngA-EngB-Septin-like GTPase superfamily. EngA (Der) GTPase family. Associates with the 50S ribosomal subunit.

Functionally, GTPase that plays an essential role in the late steps of ribosome biogenesis. The chain is GTPase Der from Prochlorococcus marinus (strain NATL2A).